The primary structure comprises 259 residues: Factor V activator (259 aa).

The signal sequence occupies residues 1–18 (MVLIRVLANLLVLQLSYA). Residues 19–24 (QKSSEL) constitute a propeptide that is removed on maturation. The 227-residue stretch at 25–251 (VVGGDECDIN…YTDWIQSIIA (227 aa)) folds into the Peptidase S1 domain. 6 disulfides stabilise this stretch: Cys31–Cys165, Cys52–Cys68, Cys100–Cys258, Cys144–Cys212, Cys176–Cys191, and Cys202–Cys227. Residues His67 and Asp112 each act as charge relay system in the active site. Ser206 serves as the catalytic Charge relay system. Asn253 carries an N-linked (GlcNAc...) asparagine glycan.

This sequence belongs to the peptidase S1 family. Snake venom subfamily. In terms of assembly, monomer. In terms of processing, N-glycosylated. Contains 4.4% of hexoses, 4.4% of hexosamines and 3.1% of sialic acids. Expressed by the venom gland.

Its subcellular location is the secreted. The catalysed reaction is Fully activates human clotting factor V by a single cleavage at the 1545-Trp-Tyr-Leu-Arg-|-Ser-Asn-Asn-Gly-1552 bond. Cattle, but not rabbit, factor V is cleaved, and no other proteins of the clotting system are attacked. Esterase activity is observed on Bz-Arg-OEt and Tos-Arg-OMe, and amidase activity on Phe-pipecolyl-Arg-NHPhNO2.. Its activity is regulated as follows. Inhibited by D-Phe-Pro-Arg-chloromethyl ketone (FPRCK) (98%), PMSF (93%), benzamidine (67%), and diisopropylfluorophosphate (DFP). Is not inhibited by BPTI, antithrombin and EDTA. Functionally, venom serine protease that converts factor V (F5) to the active form Va in the presence of calcium ions and phospholipids. It cleaves the Arg(1545)-Ser(1546) linkage in the human factor V molecule. Has hydrolytic activities against BAEE (1.2 U/mg), TAME, and Pro-Phe-Arg-MCA (4.9 U/mg). Shows coagulant activity. In Macrovipera lebetinus (Levantine viper), this protein is Factor V activator.